The sequence spans 2515 residues: Probable maltase-glucoamylase 2 (2515 aa).

At 1–9 (MARKLSVLE) the chain is on the cytoplasmic side. The helical transmembrane segment at 10–30 (VLLIIFCLIVVTIDILLLLLV) threads the bilayer. At 31-482 (LEETSDTSFT…DGVWIEMNEV (452 aa)) the chain is on the lumenal side. The P-type 1 domain maps to 41–88 (PECPEIPQSERIDCTPDQEVTEDICRWQYKCCWSPVADANVPRCFFPW). 3 disulfide bridges follow: cysteine 43-cysteine 72, cysteine 54-cysteine 71, and cysteine 65-cysteine 84. Residues 152–865 (SHENINLVDG…MDKQPANFIV (714 aa)) are maltase. The N-linked (GlcNAc...) asparagine glycan is linked to asparagine 167. Tyrosine 371 carries the post-translational modification Sulfotyrosine. Asparagine 421 carries an N-linked (GlcNAc...) asparagine glycan. Catalysis depends on glutamate 478, which acts as the Nucleophile. The active site involves glutamate 481. 3 disulfide bridges follow: cysteine 608–cysteine 619, cysteine 916–cysteine 933, and cysteine 928–cysteine 946. N-linked (GlcNAc...) asparagine glycosylation occurs at asparagine 613. In terms of domain architecture, P-type 2 spans 904 to 950 (WNLPVSDLEKFNCYPDDPTASEESCRQRGCLWEDTSTPGVPTCYYDT). A glucoamylase region spans residues 1023–1766 (PLNTPPQPVG…GVNTYVTQVS (744 aa)). A Sulfotyrosine modification is found at tyrosine 1238. Catalysis depends on aspartate 1375, which acts as the Nucleophile. Glutamate 1378 is an active-site residue. Disordered regions lie at residues 1816 to 1901 (TPTK…PITT), 1994 to 2015 (STTV…STNA), and 2037 to 2091 (TVPD…SSTT). Residues 1817–1831 (PTKTSTIPMSSHPSP) show a composition bias toward polar residues. Positions 1832–1901 (STTNATSSET…STNATVPITT (70 aa)) are enriched in low complexity. Asparagine 2249 carries an N-linked (GlcNAc...) asparagine glycan.

This sequence belongs to the glycosyl hydrolase 31 family.

Its subcellular location is the membrane. It catalyses the reaction Hydrolysis of terminal (1-&gt;4)-linked alpha-D-glucose residues successively from non-reducing ends of the chains with release of beta-D-glucose.. In Homo sapiens (Human), this protein is Probable maltase-glucoamylase 2.